The primary structure comprises 448 residues: Exodeoxyribonuclease 7 large subunit (448 aa).

The protein belongs to the XseA family. Heterooligomer composed of large and small subunits.

It localises to the cytoplasm. The catalysed reaction is Exonucleolytic cleavage in either 5'- to 3'- or 3'- to 5'-direction to yield nucleoside 5'-phosphates.. In terms of biological role, bidirectionally degrades single-stranded DNA into large acid-insoluble oligonucleotides, which are then degraded further into small acid-soluble oligonucleotides. The chain is Exodeoxyribonuclease 7 large subunit from Tolumonas auensis (strain DSM 9187 / NBRC 110442 / TA 4).